A 907-amino-acid polypeptide reads, in one-letter code: Protein translocase subunit SecA (907 aa).

ATP is bound by residues Gln-87, 105–109 (GEGKT), and Asp-510. Zn(2+) contacts are provided by Cys-892, Cys-894, Cys-903, and His-904.

Belongs to the SecA family. In terms of assembly, monomer and homodimer. Part of the essential Sec protein translocation apparatus which comprises SecA, SecYEG and auxiliary proteins SecDF-YajC and YidC. Zn(2+) is required as a cofactor.

The protein resides in the cell inner membrane. Its subcellular location is the cytoplasm. The catalysed reaction is ATP + H2O + cellular proteinSide 1 = ADP + phosphate + cellular proteinSide 2.. Its function is as follows. Part of the Sec protein translocase complex. Interacts with the SecYEG preprotein conducting channel. Has a central role in coupling the hydrolysis of ATP to the transfer of proteins into and across the cell membrane, serving both as a receptor for the preprotein-SecB complex and as an ATP-driven molecular motor driving the stepwise translocation of polypeptide chains across the membrane. In Acinetobacter baumannii (strain ACICU), this protein is Protein translocase subunit SecA.